An 85-amino-acid chain; its full sequence is Neurotoxin BmKAEP2 (85 aa).

A signal peptide spans 1-21 (MKLFLLLVISASMLIDGLVNA). The LCN-type CS-alpha/beta domain maps to 22–82 (DGYIRGSNGC…TWKSESNTCG (61 aa)). 4 disulfide bridges follow: Cys-31/Cys-81, Cys-35/Cys-56, Cys-42/Cys-63, and Cys-46/Cys-65.

This sequence belongs to the long (4 C-C) scorpion toxin superfamily. Sodium channel inhibitor family. Beta subfamily. As to expression, expressed by the venom gland.

It localises to the secreted. In terms of biological role, depressant insect beta-toxins cause a transient contraction paralysis followed by a slow flaccid paralysis. They bind voltage-independently at site-4 of sodium channels (Nav) and shift the voltage of activation toward more negative potentials thereby affecting sodium channel activation and promoting spontaneous and repetitive firing. This toxin is active only on insects. Has potential anti-epilepsy effect. This Olivierus martensii (Manchurian scorpion) protein is Neurotoxin BmKAEP2.